The primary structure comprises 463 residues: ATP synthase subunit beta (463 aa).

153-160 (GGAGVGKT) lines the ATP pocket.

This sequence belongs to the ATPase alpha/beta chains family. As to quaternary structure, F-type ATPases have 2 components, CF(1) - the catalytic core - and CF(0) - the membrane proton channel. CF(1) has five subunits: alpha(3), beta(3), gamma(1), delta(1), epsilon(1). CF(0) has three main subunits: a(1), b(2) and c(9-12). The alpha and beta chains form an alternating ring which encloses part of the gamma chain. CF(1) is attached to CF(0) by a central stalk formed by the gamma and epsilon chains, while a peripheral stalk is formed by the delta and b chains.

The protein localises to the cell inner membrane. It carries out the reaction ATP + H2O + 4 H(+)(in) = ADP + phosphate + 5 H(+)(out). In terms of biological role, produces ATP from ADP in the presence of a proton gradient across the membrane. The catalytic sites are hosted primarily by the beta subunits. In Burkholderia cepacia (Pseudomonas cepacia), this protein is ATP synthase subunit beta.